The chain runs to 457 residues: Transcription factor E2F3 (457 aa).

Positions 80–171 are disordered; it reads LLPSVPGTEP…PKSPSEKTRY (92 aa). A compositionally biased stretch (polar residues) spans 93–102; that stretch reads SLYTTPQGPS. The segment at 96-145 is cyclin A/CDK2 binding; it reads TTPQGPSSRVGLLQQPPAPGRGGGGGPPAKRRLELGESGHQYLSDGLKTP. A DNA-binding region spans residues 147 to 237; sequence GKGRAALRSP…KNNVQWMGCS (91 aa). Residues 155–164 show a composition bias toward low complexity; sequence SPDSPKTPKS. Residues 196–217 are leucine-zipper; it reads LNKAAEVLKVQKRRIYDITNVL. Positions 201–237 match the DEF box motif; sequence EVLKVQKRRIYDITNVLEGIHLIKKKSKNNVQWMGCS. A dimerization region spans residues 238 to 329; it reads LSEDGGMLAQ…VPDSIESLQI (92 aa). Residues 350 to 387 form a disordered region; that stretch reads HRPMKTNNQDHNGNIPKPTSKDLASNNSGHSDCSVSTA. Residues 371–387 are compositionally biased toward polar residues; the sequence is DLASNNSGHSDCSVSTA. The transactivation stretch occupies residues 383–457; it reads SVSTANLSPL…LPLVEDFMCS (75 aa). Residues 424 to 441 are retinoblastoma protein binding; the sequence is EDYLLSLGEEEGISDLFD.

Belongs to the E2F/DP family. As to quaternary structure, component of the DRTF1/E2F transcription factor complex. Binds cooperatively with TFDP1/Dp-1 to E2F sites. Interacts with retinoblastoma protein RB1 and related proteins (such as RBL1) that inhibit the E2F transactivation domain. Binds EAPP.

It localises to the nucleus. Its function is as follows. Transcription activator that binds DNA cooperatively with DP proteins through the E2 recognition site, 5'-TTTC[CG]CGC-3' found in the promoter region of a number of genes whose products are involved in cell cycle regulation or in DNA replication. The DRTF1/E2F complex functions in the control of cell-cycle progression from G1 to S phase. E2F3 binds specifically to RB1 in a cell-cycle dependent manner. Inhibits adipogenesis, probably through the repression of CEBPA binding to its target gene promoters. This chain is Transcription factor E2F3 (E2f3), found in Mus musculus (Mouse).